The following is a 1841-amino-acid chain: Cell division control protein 12 (1841 aa).

2 stretches are compositionally biased toward polar residues: residues 1-25 (MRNSSKGQDPNFSYDSILSTPTPSA) and 46-63 (SIESVSTLIQPNKSQSVT). 3 disordered regions span residues 1–63 (MRNS…QSVT), 78–134 (NSHN…GPRL), and 152–181 (PPVHSRSFDPLPKPPVPSVPVSKTKRRTKH). The region spanning 232-620 (TRPPSLDQLI…RILLNSKVSN (389 aa)) is the GBD/FH3 domain. A coiled-coil region spans residues 674–715 (LGAEDLIAKLNKEVEDQKDVILSQKRTNETLKTEIDALQKSH). The 233-residue stretch at 740–972 (GSTNSKERII…VSPAVSNNIS (233 aa)) folds into the FH1 domain. In terms of domain architecture, FH2 spans 980–1391 (TGLTRRPTRR…QHRRLNLVNN (412 aa)). Positions 1260–1290 (TEAAKLNIEAIEQECSELIRGCQNLQIDCDS) form a coiled coil. Disordered regions lie at residues 1445-1661 (EAPN…ENNL), 1696-1715 (TTTTISTARAKPGNNDINTI), and 1735-1758 (KSNKFSGTNDLNFQQATKPDGSNK). Polar residues-rich tracts occupy residues 1447–1456 (PNTSTKSSPA) and 1483–1497 (SESTDGLSDALNITP). The span at 1499–1516 (KKGEVSSKAKKGYNYEKR) shows a compositional bias: basic and acidic residues. Positions 1539 to 1553 (GRSASYTFSDPSSLE) are enriched in polar residues. S1541 bears the Phosphoserine mark. Y1544 carries the post-translational modification Phosphotyrosine. Basic and acidic residues predominate over residues 1554-1567 (DSNRQKPFNGEKFR). Over residues 1568 to 1577 (RFSSKSRRGS) the composition is skewed to basic residues. Residues 1594-1604 (INNNQTSPQNK) show a composition bias toward polar residues. A compositionally biased stretch (basic and acidic residues) spans 1605–1621 (PSKESLKSDTISNEKKV). Residues 1630–1641 (NLLTPTISNGTR) show a composition bias toward polar residues.

This sequence belongs to the formin homology family. BNI1 subfamily. As to quaternary structure, interacts with profilin and actin at the FH1 and FH2 domains respectively.

It localises to the nucleus. In terms of biological role, plays a role in the cell cycle. Involved in cytokinesis. Component of the cell division ring. In the absence of profilin, caps the barbed end of actin filaments, thus preventing subunit addition and dissociation. In the presence of profilin, nucleates actin filaments that grow rapidly from their barbed ends. The chain is Cell division control protein 12 (cdc12) from Schizosaccharomyces pombe (strain 972 / ATCC 24843) (Fission yeast).